The chain runs to 392 residues: Ribonuclease D (392 aa).

The 3'-5' exonuclease domain occupies 12–178 (LIETTEALAA…PVYEGLRARL (167 aa)). An HRDC domain is found at 217–298 (NRRQLALVKA…ASTKAIPDAE (82 aa)).

This sequence belongs to the RNase D family. The cofactor is a divalent metal cation.

Its subcellular location is the cytoplasm. It carries out the reaction Exonucleolytic cleavage that removes extra residues from the 3'-terminus of tRNA to produce 5'-mononucleotides.. In terms of biological role, exonuclease involved in the 3' processing of various precursor tRNAs. Initiates hydrolysis at the 3'-terminus of an RNA molecule and releases 5'-mononucleotides. This chain is Ribonuclease D, found in Acidiphilium cryptum (strain JF-5).